We begin with the raw amino-acid sequence, 182 residues long: Putative manganese efflux pump MntP (182 aa).

5 helical membrane-spanning segments follow: residues 3–23 (ILLLAVALSMDCVALSMSNGA), 42–62 (FFQGAMPIIGFFLGALFVGFI), 65–85 (IDHFVAFAILGFLGVKMIFDS), 126–146 (IWFSCAIIAFVCFILSFAATF), and 161–181 (ILGGLILIFIGFKILITHLGI).

It belongs to the MntP (TC 9.B.29) family.

It localises to the cell inner membrane. Functionally, probably functions as a manganese efflux pump. The polypeptide is Putative manganese efflux pump MntP (Campylobacter hominis (strain ATCC BAA-381 / DSM 21671 / CCUG 45161 / LMG 19568 / NCTC 13146 / CH001A)).